The primary structure comprises 62 residues: uncharacterized protein (62 aa).

A helical transmembrane segment spans residues 15–37 (FSSGVLISNFLLFNFIIISHSSL). Residues 41–56 (TTTTTTTTTTTTNTKS) show a composition bias toward low complexity. The segment at 41 to 62 (TTTTTTTTTTTTNTKSTLHRSG) is disordered.

The protein resides in the membrane. This is an uncharacterized protein from Dictyostelium discoideum (Social amoeba).